The chain runs to 156 residues: Small ribosomal subunit protein uS7 (156 aa).

The protein belongs to the universal ribosomal protein uS7 family. Part of the 30S ribosomal subunit. Contacts proteins S9 and S11.

In terms of biological role, one of the primary rRNA binding proteins, it binds directly to 16S rRNA where it nucleates assembly of the head domain of the 30S subunit. Is located at the subunit interface close to the decoding center, probably blocks exit of the E-site tRNA. The sequence is that of Small ribosomal subunit protein uS7 from Agrobacterium fabrum (strain C58 / ATCC 33970) (Agrobacterium tumefaciens (strain C58)).